A 163-amino-acid polypeptide reads, in one-letter code: Lipoprotein signal peptidase (163 aa).

4 helical membrane passes run 9 to 29 (AWPWLWLSVLVILLDQLSKYL), 42 to 62 (ILPFLNFTLNYNTGAAFSFLG), 67 to 87 (WQIIFFAAISFVVSIFLILWL), and 93 to 113 (SEIMMSLGLSLIIGGALGNFI). Catalysis depends on residues aspartate 123 and aspartate 141. A helical membrane pass occupies residues 137 to 157 (FNVADSAICVGVFLLIVYMLL).

The protein belongs to the peptidase A8 family.

It localises to the cell inner membrane. It carries out the reaction Release of signal peptides from bacterial membrane prolipoproteins. Hydrolyzes -Xaa-Yaa-Zaa-|-(S,diacylglyceryl)Cys-, in which Xaa is hydrophobic (preferably Leu), and Yaa (Ala or Ser) and Zaa (Gly or Ala) have small, neutral side chains.. Its pathway is protein modification; lipoprotein biosynthesis (signal peptide cleavage). This protein specifically catalyzes the removal of signal peptides from prolipoproteins. The polypeptide is Lipoprotein signal peptidase (Coxiella burnetii (strain Dugway 5J108-111)).